Consider the following 216-residue polypeptide: U1 small nuclear ribonucleoprotein C (216 aa).

Residues 4 to 36 (FFCDYCDVYLTHDSMSVRKAHNSGRNHLRNVVD) form a Matrin-type zinc finger. Disordered stretches follow at residues 70–89 (PQNQ…PGAG) and 125–216 (PGGI…ADKR). Composition is skewed to pro residues over residues 140–149 (PPMPPFPGMP) and 157–204 (GVPP…PPFG).

It belongs to the U1 small nuclear ribonucleoprotein C family. In terms of assembly, U1 snRNP is composed of the 7 core Sm proteins B/B', D1, D2, D3, E, F and G that assemble in a heptameric protein ring on the Sm site of the small nuclear RNA to form the core snRNP, and at least 3 U1 snRNP-specific proteins U1-70K, U1-A and U1-C. U1-C interacts with U1 snRNA and the 5' splice-site region of the pre-mRNA.

It is found in the nucleus. Functionally, component of the spliceosomal U1 snRNP, which is essential for recognition of the pre-mRNA 5' splice-site and the subsequent assembly of the spliceosome. U1-C is directly involved in initial 5' splice-site recognition for both constitutive and regulated alternative splicing. The interaction with the 5' splice-site seems to precede base-pairing between the pre-mRNA and the U1 snRNA. Stimulates commitment or early (E) complex formation by stabilizing the base pairing of the 5' end of the U1 snRNA and the 5' splice-site region. The sequence is that of U1 small nuclear ribonucleoprotein C from Neurospora crassa (strain ATCC 24698 / 74-OR23-1A / CBS 708.71 / DSM 1257 / FGSC 987).